The chain runs to 118 residues: Ribulose bisphosphate carboxylase small subunit 2 (118 aa).

It belongs to the RuBisCO small chain family. In terms of assembly, heterohexadecamer of 8 large and 8 small subunits.

In terms of biological role, ruBisCO catalyzes two reactions: the carboxylation of D-ribulose 1,5-bisphosphate, the primary event in carbon dioxide fixation, as well as the oxidative fragmentation of the pentose substrate. Both reactions occur simultaneously and in competition at the same active site. Although the small subunit is not catalytic it is essential for maximal activity. In Acidithiobacillus ferrooxidans (Thiobacillus ferrooxidans), this protein is Ribulose bisphosphate carboxylase small subunit 2.